We begin with the raw amino-acid sequence, 155 residues long: Biotin carboxyl carrier protein of acetyl-CoA carboxylase (155 aa).

The Biotinyl-binding domain occupies 72–155 (AASDELSGHL…EFDEPLIVIE (84 aa)). N6-biotinyllysine is present on Lys-121.

In terms of assembly, homodimer.

It functions in the pathway lipid metabolism; fatty acid biosynthesis. Functionally, this protein is a component of the acetyl coenzyme A carboxylase complex; first, biotin carboxylase catalyzes the carboxylation of the carrier protein and then the transcarboxylase transfers the carboxyl group to form malonyl-CoA. This Haemophilus influenzae (strain ATCC 51907 / DSM 11121 / KW20 / Rd) protein is Biotin carboxyl carrier protein of acetyl-CoA carboxylase (accB).